Reading from the N-terminus, the 416-residue chain is Formyl-CoA:oxalate CoA-transferase (416 aa).

Residues 17–18 (QS), R38, 72–75 (LNTK), 96–98 (NFH), H104, and 137–140 (KAYE) each bind CoA. Catalysis depends on D169, which acts as the Nucleophile. Position 248-250 (248-250 (GGQ)) interacts with substrate. 273-275 (QEQ) is a CoA binding site.

Belongs to the CoA-transferase III family. Frc subfamily. Homodimer.

It catalyses the reaction formyl-CoA + oxalate = oxalyl-CoA + formate. The protein operates within metabolic intermediate degradation; oxalate degradation; CO(2) and formate from oxalate: step 1/2. In terms of biological role, involved in the catabolism of oxalate and in the adapatation to low pH via the induction of the oxalate-dependent acid tolerance response (ATR). Catalyzes the transfer of the CoA moiety from formyl-CoA to oxalate. The polypeptide is Formyl-CoA:oxalate CoA-transferase (Escherichia coli O17:K52:H18 (strain UMN026 / ExPEC)).